An 801-amino-acid chain; its full sequence is Cadherin-20 (801 aa).

Positions 1 to 34 are cleaved as a signal peptide; the sequence is MWTTGRMSNAKSWLGLGTSLYFWALMDLATTVLS. Residues 35–59 constitute a propeptide that is removed on maturation; it reads STPMPEVELDTLFSGKPQSHQRSRR. Topologically, residues 60 to 619 are extracellular; sequence SWVWNQFFVL…AYMLPVSLSR (560 aa). Cadherin domains are found at residues 61–165, 166–274, 275–389, 390–494, and 494–610; these read WVWN…EPKF, LDGP…PPRF, PQKH…PPVF, EPRF…APEF, and FPRF…SPEA. A glycan (N-linked (GlcNAc...) asparagine) is linked at N261. N-linked (GlcNAc...) asparagine glycosylation is found at N420, N461, and N542. Residues 620 to 640 traverse the membrane as a helical segment; the sequence is GALIAILACVFVLLVLVLLIL. Residues 641–801 lie on the Cytoplasmic side of the membrane; that stretch reads SMRRHRKQPY…GASEGPSPLW (161 aa).

The protein localises to the cell membrane. Functionally, cadherins are calcium-dependent cell adhesion proteins. They preferentially interact with themselves in a homophilic manner in connecting cells; cadherins may thus contribute to the sorting of heterogeneous cell types. The chain is Cadherin-20 (Cdh20) from Rattus norvegicus (Rat).